A 52-amino-acid chain; its full sequence is Small, acid-soluble spore protein K (52 aa).

The disordered stretch occupies residues 1–52 (MGKQAEFWSESKNNSKIDGQPKAKSRFASKRPNGTINTHPQERMRAANQQEE).

This sequence belongs to the SspK family.

Its subcellular location is the spore core. This chain is Small, acid-soluble spore protein K, found in Bacillus anthracis (strain A0248).